The following is a 110-amino-acid chain: Ribonuclease P protein component 4 (110 aa).

Positions 65, 68, 94, and 97 each coordinate Zn(2+).

This sequence belongs to the eukaryotic/archaeal RNase P protein component 4 family. As to quaternary structure, consists of a catalytic RNA component and at least 4-5 protein subunits. Requires Zn(2+) as cofactor.

It localises to the cytoplasm. The enzyme catalyses Endonucleolytic cleavage of RNA, removing 5'-extranucleotides from tRNA precursor.. Part of ribonuclease P, a protein complex that generates mature tRNA molecules by cleaving their 5'-ends. This is Ribonuclease P protein component 4 from Methanococcus maripaludis (strain C7 / ATCC BAA-1331).